A 303-amino-acid polypeptide reads, in one-letter code: Acetyl-coenzyme A carboxylase carboxyl transferase subunit beta (303 aa).

A CoA carboxyltransferase N-terminal domain is found at 25–294 (LWIKCPETGE…NDVSAKSLNG (270 aa)).

Belongs to the AccD/PCCB family. As to quaternary structure, acetyl-CoA carboxylase is a heterohexamer composed of biotin carboxyl carrier protein (AccB), biotin carboxylase (AccC) and two subunits each of ACCase subunit alpha (AccA) and ACCase subunit beta (AccD).

It localises to the cytoplasm. The catalysed reaction is N(6)-carboxybiotinyl-L-lysyl-[protein] + acetyl-CoA = N(6)-biotinyl-L-lysyl-[protein] + malonyl-CoA. It participates in lipid metabolism; malonyl-CoA biosynthesis; malonyl-CoA from acetyl-CoA: step 1/1. Functionally, component of the acetyl coenzyme A carboxylase (ACC) complex. Biotin carboxylase (BC) catalyzes the carboxylation of biotin on its carrier protein (BCCP) and then the CO(2) group is transferred by the transcarboxylase to acetyl-CoA to form malonyl-CoA. The polypeptide is Acetyl-coenzyme A carboxylase carboxyl transferase subunit beta (Rhizobium rhizogenes (strain K84 / ATCC BAA-868) (Agrobacterium radiobacter)).